The chain runs to 249 residues: Acidic leucine-rich nuclear phosphoprotein 32 family member A (249 aa).

Residue threonine 15 is modified to Phosphothreonine. The residue at position 17 (serine 17) is a Phosphoserine. LRR repeat units lie at residues 18–38, 43–64, 65–87, and 89–110; these read DVKELVLDNSRSNEGKLEGLT, ELEFLSTINVGLTSIANLPKLN, KLKKLELSDNRVSGGLEVLAEKC, and NLTHLNLSGNKIKDLSTIEPLK. The 39-residue stretch at 123–161 folds into the LRRCT domain; sequence CEVTNLNDYRENVFKLLPQLTYLDGYDRDDKEAPDSDAE. Positions 147-156 are enriched in basic and acidic residues; sequence GYDRDDKEAP. A disordered region spans residues 147–249; that stretch reads GYDRDDKEAP…EPEDEGEDDD (103 aa). Residues 150 to 174 form a necessary for tumor-suppressive function region; that stretch reads RDDKEAPDSDAEGYVEGLDDEEEDE. The segment covering 157 to 230 has biased composition (acidic residues); the sequence is DSDAEGYVEG…DEEDEEELGE (74 aa). Phosphoserine; by CK2 is present on residues serine 158 and serine 204. The tract at residues 165–249 is interaction with E4F1; the sequence is EGLDDEEEDE…EPEDEGEDDD (85 aa).

It belongs to the ANP32 family. Component of the SET complex, composed of at least ANP32A, APEX1, HMGB2, NME1, SET and TREX1. Directly interacts with SET. Interacts with ATXN1/SCA1. Interacts with MAP1B. Interacts with ELAVL1. Part of the INHAT (inhibitor of histone acetyltransferases) complex. Interacts with E4F1. As to quaternary structure, (Microbial infection) Interacts (via C-terminus) with influenza virus A protein PB2; this interaction promotes viral replication. In terms of assembly, (Microbial infection) Interacts (via C-terminus) with influenza virus B protein PB2; this interaction promotes viral replication. (Microbial infection) Interacts (via C-terminus) with influenza virus C protein PB2; this interaction promotes viral replication by bridging viral replicase dimers together. Phosphorylated on serine residues, at least in part by casein kinase 2/CK2. Post-translationally, the N-terminus is blocked. In terms of processing, some glutamate residues are glycylated by TTLL8. This modification occurs exclusively on glutamate residues and results in a glycine chain on the gamma-carboxyl group. As to expression, expressed in all tissues tested. Highly expressed in kidney and skeletal muscle, moderate levels of expression in brain, placenta and pancreas, and weakly expressed in lung. Found in all regions of the brain examined (amygdala, caudate nucleus, corpus callosum, hippocampus and thalamus), with highest levels in amygdala.

It is found in the nucleus. The protein resides in the cytoplasm. Its subcellular location is the endoplasmic reticulum. Functionally, multifunctional protein that is involved in the regulation of many processes including tumor suppression, apoptosis, cell cycle progression or transcription. Promotes apoptosis by favouring the activation of caspase-9/CASP9 and allowing apoptosome formation. In addition, plays a role in the modulation of histone acetylation and transcription as part of the INHAT (inhibitor of histone acetyltransferases) complex. Inhibits the histone-acetyltranferase activity of EP300/CREBBP (CREB-binding protein) and EP300/CREBBP-associated factor by histone masking. Preferentially binds to unmodified histone H3 and sterically inhibiting its acetylation and phosphorylation leading to cell growth inhibition. Participates in other biochemical processes such as regulation of mRNA nuclear-to-cytoplasmic translocation and stability by its association with ELAVL1 (Hu-antigen R). Plays a role in E4F1-mediated transcriptional repression as well as inhibition of protein phosphatase 2A. Its function is as follows. (Microbial infection) Plays an essential role in influenza A, B and C viral genome replication. Mechanistically, mediates the assembly of the viral replicase asymmetric dimers composed of PB1, PB2 and PA via its N-terminal region. Also plays an essential role in foamy virus mRNA export from the nucleus. The sequence is that of Acidic leucine-rich nuclear phosphoprotein 32 family member A (ANP32A) from Homo sapiens (Human).